Consider the following 379-residue polypeptide: Cytochrome b (379 aa).

4 helical membrane-spanning segments follow: residues Phe-33–Met-53, Trp-77–Ala-98, Trp-113–Leu-133, and Phe-178–Leu-198. Residues His-83 and His-97 each coordinate heme b. His-182 and His-196 together coordinate heme b. His-201 is a binding site for a ubiquinone. 4 helical membrane passes run Ile-226 to Phe-246, Leu-288 to Asn-308, Ile-320 to Gly-340, and Phe-347 to Pro-367.

It belongs to the cytochrome b family. The cytochrome bc1 complex contains 11 subunits: 3 respiratory subunits (MT-CYB, CYC1 and UQCRFS1), 2 core proteins (UQCRC1 and UQCRC2) and 6 low-molecular weight proteins (UQCRH/QCR6, UQCRB/QCR7, UQCRQ/QCR8, UQCR10/QCR9, UQCR11/QCR10 and a cleavage product of UQCRFS1). This cytochrome bc1 complex then forms a dimer. Heme b serves as cofactor.

It is found in the mitochondrion inner membrane. Its function is as follows. Component of the ubiquinol-cytochrome c reductase complex (complex III or cytochrome b-c1 complex) that is part of the mitochondrial respiratory chain. The b-c1 complex mediates electron transfer from ubiquinol to cytochrome c. Contributes to the generation of a proton gradient across the mitochondrial membrane that is then used for ATP synthesis. The chain is Cytochrome b (MT-CYB) from Thaptomys nigrita (Blackish grass mouse).